We begin with the raw amino-acid sequence, 465 residues long: Mothers against decapentaplegic homolog 5 (465 aa).

At Thr2 the chain carries N-acetylthreonine. One can recognise an MH1 domain in the interval 13 to 137 (PAVKRLLGWK…YKRVESPVLP (125 aa)). Zn(2+) is bound by residues Cys65, Cys110, Cys122, and His127. The interval 163 to 251 (NEPHMPQNAT…DTSSNMIPQT (89 aa)) is disordered. Over residues 169–182 (QNATFPDSFHQPNN) the composition is skewed to polar residues. Positions 186-197 (PLSPNSPYPPSP) are enriched in pro residues. Over residues 198–214 (ASSTYPNSPASSGPGSP) the composition is skewed to low complexity. Polar residues predominate over residues 237 to 251 (NSQPMDTSSNMIPQT). Residues 271–465 (WCSIVYYELN…SPLNPISSVS (195 aa)) form the MH2 domain. A phosphoserine mark is found at Ser463 and Ser465.

The protein belongs to the dwarfin/SMAD family. In terms of assembly, homodimer. Forms trimers with the co-SMAD SMAD4. Interacts with PEBP2-alpha subunit and SMURF1. Interacts with SUV39H1 and SUV39H2. Interacts (via MH2 domain) with LEMD3. Interacts with WWP1. Interacts with TMEM119. Interacts with ZNF8. Interacts with RANBP3L. Interacts with HK1. Interacts with HGS; this interaction attenuates BMP signaling. Phosphorylated on serine by BMP (bone morphogenetic proteins) type 1 receptor kinase. Post-translationally, ubiquitin-mediated proteolysis by SMAD-specific E3 ubiquitin ligase SMURF1. Predominantly expressed in mesenchyme and somites during embryogenesis, and present in many tissues of the adult.

It is found in the cytoplasm. The protein localises to the nucleus. It localises to the mitochondrion. Functionally, transcriptional regulator that plays a role in various cellular processes including embryonic development, cell differentiation, angiogenesis and tissue homeostasis. Upon BMP ligand binding to their receptors at the cell surface, is phosphorylated by activated type I BMP receptors (BMPRIs) and associates with SMAD4 to form a heteromeric complex which translocates into the nucleus acting as transcription factor. In turn, the hetero-trimeric complex recognizes cis-regulatory elements containing Smad Binding Elements (SBEs) to modulate the outcome of the signaling network. Non-phosphorylated SMAD5 has a cytoplasmic role in energy metabolism regulation by promoting mitochondrial respiration and glycolysis in response to cytoplasmic pH changes. Mechanistically, interacts with hexokinase 1/HK1 and thereby accelerates glycolysis. The protein is Mothers against decapentaplegic homolog 5 (Smad5) of Mus musculus (Mouse).